Here is a 457-residue protein sequence, read N- to C-terminus: DNA repair protein RadA (457 aa).

Residues Cys12–Cys29 form a C4-type zinc finger. Residue Gly97–Ser104 participates in ATP binding. Positions Lys254 to Gly258 match the RadA KNRFG motif motif. The tract at residues Asp353 to Asp457 is lon-protease-like.

This sequence belongs to the RecA family. RadA subfamily.

Functionally, DNA-dependent ATPase involved in processing of recombination intermediates, plays a role in repairing DNA breaks. Stimulates the branch migration of RecA-mediated strand transfer reactions, allowing the 3' invading strand to extend heteroduplex DNA faster. Binds ssDNA in the presence of ADP but not other nucleotides, has ATPase activity that is stimulated by ssDNA and various branched DNA structures, but inhibited by SSB. Does not have RecA's homology-searching function. This chain is DNA repair protein RadA, found in Listeria monocytogenes serovar 1/2a (strain ATCC BAA-679 / EGD-e).